The following is a 241-amino-acid chain: 1-(5-phosphoribosyl)-5-[(5-phosphoribosylamino)methylideneamino] imidazole-4-carboxamide isomerase (241 aa).

The Proton acceptor role is filled by aspartate 8. Aspartate 131 (proton donor) is an active-site residue.

The protein belongs to the HisA/HisF family.

The protein resides in the cytoplasm. The catalysed reaction is 1-(5-phospho-beta-D-ribosyl)-5-[(5-phospho-beta-D-ribosylamino)methylideneamino]imidazole-4-carboxamide = 5-[(5-phospho-1-deoxy-D-ribulos-1-ylimino)methylamino]-1-(5-phospho-beta-D-ribosyl)imidazole-4-carboxamide. It functions in the pathway amino-acid biosynthesis; L-histidine biosynthesis; L-histidine from 5-phospho-alpha-D-ribose 1-diphosphate: step 4/9. This chain is 1-(5-phosphoribosyl)-5-[(5-phosphoribosylamino)methylideneamino] imidazole-4-carboxamide isomerase, found in Sorangium cellulosum (strain So ce56) (Polyangium cellulosum (strain So ce56)).